Reading from the N-terminus, the 1013-residue chain is Nucleotide-binding oligomerization domain-containing protein 2 (1013 aa).

CARD domains lie at 1 to 82 (MCSQ…AVQE) and 107 to 178 (LQSH…HVQK). An ATG16L1-binding motif motif is present at residues 36–50 (WEVLSWEDYEGLRLV). Residues Thr212, Tyr225, Thr226, Gly275, Ser276, Gly277, Lys278, Ser279, and Thr280 each contribute to the ADP site. The tract at residues 214–247 (DGAENLCLEDIYTENTLEVRTEVGMAGPLHKSPA) is required for CARD9 binding. Residues 266–402 (DTVLVVGEAG…RKVLTSRPDA (137 aa)) enclose the NACHT domain. 272 to 279 (GEAGSGKS) contributes to the ATP binding site. Cys368 is lipidated: S-palmitoyl cysteine. His576 provides a ligand contact to ADP. 9 LRR repeats span residues 764–785 (RPVALQLDHNSVGDIGVEQLLP), 789–812 (ACKALYLRDNNISDRGICKLIEHA), 817–838 (QLQKLALFNNKLTDGCAHSVAQ), 845–857 (NFLALRLGNNHIT), 873–893 (SLQFLGFWGNKVGDKGAQALA), 901–922 (SLKWLSLVGNNIGSVGAQALAS), 929–949 (ALEELCLEENHLQDAGVCSLA), 957–978 (SLKVLKLSNNCITFVGAEALLQ), and 985–1005 (TILEVWLRGNPFSPEEMEALS).

Belongs to the NOD1-NOD2 family. Homooligomer: homooligomerizes following muramyl dipeptide (MDP)-binding, promoting RIPK2 recruitment. Interacts (via CARD domain) with RIPK2 (via CARD domain). Following RIPK2 recruitment, RIPK2 homooligomerizes via its CARD domain and forms long filaments named RIPosomes. Interacts (via CARD domain) with ubiquitin; inhibiting interaction with RIPK2. Component of a signaling complex consisting of ARHGEF2, NOD2 and RIPK2. Interacts with ANKRD17 (via N-terminus). Interacts with HSPA1A; the interaction enhances NOD2 stability. Interacts (via both CARD domains) with HSP90; the interaction enhances NOD2 stability. Interacts (via CARD domain) with SOCS3; the interaction promotes NOD2 degradation. Interacts (via CARD domain) with ERBIN; the interaction inhibits activation of NOD2. Interacts with MAPKBP1; the interaction is enhanced in the presence of muramyl dipeptide (MDP) and inhibits NOD2 homooligomerization and activation. Interacts with INAVA; the interaction takes place upon Pattern recognition receptor (PRR) stimulation. Interacts (via NACHT domain) with CARD9. Interacts (via CARD domain) with CASP1; this interaction leads to IL1B processing. Also interacts with CASP4. Interacts with NLRP1; this interaction is enhanced in the presence of muramyl dipeptide (MDP) and leads to increased IL1B release. Interacts with NLRP12; this interaction promotes degradation of NOD2 through the ubiquitin-proteasome pathway. Interacts with ANKHD1, C10orf67, CHMP5, DOCK7, ENTR1, KRT15, LDOC1, PPP1R12C, PPP2R3B, TRIM41 and VIM. Interacts with MAVS; interaction takes place following single-stranded RNA (ssRNA)-binding. Interacts with ATG16L1. Interacts with IRGM; promoting IRGM 'Lys-63'-linked polyubiquitination, which is required for interactions with the core autophagy factors. Post-translationally, palmitoylated by ZDHHC5; palmitoylation is required for proper recruitment to the bacterial entry site and hence for proper signaling upon cognate peptidoglycan detection. Palmitoylation promotes localization to the cell membrane. Palmitoylation protects from SQSTM1/p62-dependent autophagic degradation. In terms of processing, polyubiquitinated by TRIM27, leading to proteasome-mediated degradation. Polyubiquitinated and degraded following muramyl dipeptide (MDP) stimulation, conferring MDP tolerance and preventing septic shock. Degraded via selective autophagy following interaction with IRGM. IRGM promotes NOD2-RIPK2 RIPosome recruitment to autophagosome membranes, promoting their SQSTM1/p62-dependent autophagic degradation. Post-translationally, O-glycosylated by OGT, O-GlcNAcylation increases protein stability.

Its subcellular location is the cell membrane. The protein localises to the basolateral cell membrane. It localises to the cytoplasm. The protein resides in the mitochondrion. Its activity is regulated as follows. ADP-binding promotes an inactive closed conformation. Pattern recognition receptor (PRR) that detects bacterial peptidoglycan fragments and other danger signals and plays an important role in gastrointestinal immunity. Specifically activated by muramyl dipeptide (MDP), a fragment of bacterial peptidoglycan found in every bacterial peptidoglycan type. NOD2 specifically recognizes and binds 6-O-phospho-MDP, the phosphorylated form of MDP, which is generated by NAGK. 6-O-phospho-MDP-binding triggers oligomerization that facilitates the binding and subsequent activation of the proximal adapter receptor-interacting RIPK2. Following recruitment, RIPK2 undergoes 'Met-1'- (linear) and 'Lys-63'-linked polyubiquitination by E3 ubiquitin-protein ligases XIAP, BIRC2, BIRC3 and the LUBAC complex, becoming a scaffolding protein for downstream effectors, triggering activation of the NF-kappa-B and MAP kinases signaling. This in turn leads to the transcriptional activation of hundreds of genes involved in immune response. Its ability to detect bacterial MDP plays a central role in maintaining the equilibrium between intestinal microbiota and host immune responses to control inflammation. An imbalance in this relationship results in dysbiosis, whereby pathogenic bacteria prevail on commensals, causing damage in the intestinal epithelial barrier as well as allowing bacterial invasion and inflammation. Acts as a regulator of appetite by sensing MDP in a subset of brain neurons: microbiota-derived MDP reach the brain, where they bind and activate NOD2 in inhibitory hypothalamic neurons, decreasing neuronal activity, thereby regulating satiety and body temperature. NOD2-dependent MDP-sensing of bacterial cell walls in the intestinal epithelial compartment contributes to sustained postnatal growth upon undernutrition. Also plays a role in antiviral response by acting as a sensor of single-stranded RNA (ssRNA) from viruses: upon ssRNA-binding, interacts with MAVS, leading to activation of interferon regulatory factor-3/IRF3 and expression of type I interferon. Also acts as a regulator of autophagy in dendritic cells via its interaction with ATG16L1, possibly by recruiting ATG16L1 at the site of bacterial entry. NOD2 activation in the small intestine crypt also contributes to intestinal stem cells survival and function: acts by promoting mitophagy via its association with ATG16L1. In addition to its main role in innate immunity, also regulates the adaptive immune system by acting as regulator of helper T-cell and regulatory T-cells (Tregs). Besides recognizing pathogens, also involved in the endoplasmic reticulum stress response: acts by sensing and binding to the cytosolic metabolite sphingosine-1-phosphate generated in response to endoplasmic reticulum stress, initiating an inflammation process that leads to activation of the NF-kappa-B and MAP kinases signaling. May also be involved in NLRP1 activation following activation by MDP, leading to CASP1 activation and IL1B release in macrophages. The polypeptide is Nucleotide-binding oligomerization domain-containing protein 2 (Oryctolagus cuniculus (Rabbit)).